A 1359-amino-acid polypeptide reads, in one-letter code: Transcriptional regulator ATRX homolog (1359 aa).

The disordered stretch occupies residues 1 to 402; it reads MRVGVSESED…RAEKERRKRL (402 aa). Over residues 11 to 49 the composition is skewed to basic and acidic residues; it reads SDGHVIEDEDLEMARQIENERKEKRAQKLKEKREREGKP. Residues 50-61 are compositionally biased toward basic residues; that stretch reads PPKKRPAKKRKA. The span at 64–73 shows a compositional bias: acidic residues; the sequence is SEEDDDDEEE. 6 stretches are compositionally biased toward basic residues: residues 77–86, 103–123, 139–149, 165–177, 194–204, and 219–229; these read KSSKKSRKRA, KSKS…KKRT, KSKKKSKKTKK, VKKS…KSVK, KKSKKGLKKKA, and KKSKKKSKKVV. Over residues 257-271 the composition is skewed to acidic residues; it reads ESSESEKSDEEEEEK. Over residues 321-336 the composition is skewed to basic and acidic residues; it reads KDQKSESEASDVEEKV. Positions 347–357 are enriched in low complexity; the sequence is SESGSDSSEGS. The segment covering 362-376 has biased composition (basic residues); the sequence is RKSKKKEKPEKKKKG. Residues 383 to 397 are compositionally biased toward basic and acidic residues; it reads KLQKETIDAERAEKE. Positions 483 to 685 constitute a Helicase ATP-binding domain; that stretch reads DRLDTEGSGG…HCMVNFVKPG (203 aa). 496 to 503 contacts ATP; the sequence is HCMGLGKT. The DEAH box signature appears at 636–639; sequence DEAH. The disordered stretch occupies residues 809–891; sequence RVMREDAEEE…NSDDEDEEDG (83 aa). Acidic residues predominate over residues 814–832; sequence DAEEEADFIDDGDGSESES. Positions 833 to 847 are enriched in low complexity; that stretch reads EGSFKSGSESDSGKS. The Helicase C-terminal domain occupies 951 to 1134; sequence LLVEIIKKCE…EAQIQRHYLG (184 aa).

This sequence belongs to the SNF2/RAD54 helicase family.

It is found in the nucleus. It carries out the reaction ATP + H2O = ADP + phosphate + H(+). Functionally, required for embryonic development and gonadogenesis. Also, functions redundantly with the transcriptional repressor lin-35 to regulate somatic gonad development. The protein is Transcriptional regulator ATRX homolog of Caenorhabditis elegans.